The chain runs to 841 residues: MAP7 domain-containing protein 1 (841 aa).

Disordered regions lie at residues 1-151 and 184-208; these read MESG…ERAK and EQRL…EKNK. Pro residues predominate over residues 22–52; that stretch reads PPEPRPSPEGDPSPPPPPMSALVPDTPPDTP. 2 positions are modified to phosphothreonine: Thr47 and Thr51. A phosphoserine mark is found at Ser70, Ser86, and Ser93. A Phosphothreonine modification is found at Thr97. Phosphoserine occurs at positions 113 and 116. Thr118 bears the Phosphothreonine mark. Ser123 and Ser125 each carry phosphoserine. Positions 128–222 form a coiled coil; the sequence is TKQEVKKAGE…AAIQRSVKKT (95 aa). Basic and acidic residues predominate over residues 130 to 151; that stretch reads QEVKKAGERHKLAKERREERAK. Residues Ser254, Ser273, Ser313, Ser366, and Ser399 each carry the phosphoserine modification. The tract at residues 316-813 is disordered; that stretch reads TLPRNGRDQG…PSGDKSLSRT (498 aa). The segment covering 365–377 has biased composition (polar residues); the sequence is ASASPLTPCSVTR. Residues 405–435 show a composition bias toward basic and acidic residues; that stretch reads RRPEASPVQKKEKKDKERENEKEKSALARER. Positions 412-441 form a coiled coil; it reads VQKKEKKDKERENEKEKSALARERSLKKRQ. Phosphoserine is present on residues Ser442, Ser446, Ser452, Ser454, and Ser460. The span at 460 to 473 shows a compositional bias: low complexity; the sequence is SPKSKARPSSPSTS. A Glycyl lysine isopeptide (Lys-Gly) (interchain with G-Cter in SUMO2) cross-link involves residue Lys462. Phosphoserine occurs at positions 479 and 496. A compositionally biased stretch (pro residues) spans 479–497; that stretch reads SPCPSPGPGHTLPPKPPSP. The segment covering 523-539 has biased composition (basic and acidic residues); that stretch reads PEDKSQSKRRASNEKES. A phosphoserine mark is found at Ser544, Ser548, and Ser552. Residues 544–561 are compositionally biased toward pro residues; sequence SPAPSPAPSPTPAPPQKE. Thr554 bears the Phosphothreonine mark. Positions 562–576 are enriched in low complexity; that stretch reads QPPAETPTDAAVLTS. The span at 577 to 586 shows a compositional bias: pro residues; it reads PPAPAPPVTP. The stretch at 593-721 forms a coiled coil; sequence TTDREEATRL…LEEIMKRTRK (129 aa). The span at 594-735 shows a compositional bias: basic and acidic residues; sequence TDREEATRLL…ETKQKQDSKE (142 aa). 2 positions are modified to phosphoserine: Ser742 and Ser753. Phosphothreonine occurs at positions 813 and 816. Ser834 is modified (phosphoserine).

This sequence belongs to the MAP7 family.

Its subcellular location is the cytoplasm. The protein resides in the cytoskeleton. The protein localises to the spindle. It is found in the microtubule organizing center. It localises to the centrosome. Its subcellular location is the midbody. Functionally, microtubule-stabilizing protein involved in the control of cell motility and neurite outgrowth. Facilitate microtubule stabilization through the maintenance of acetylated stable microtubules. The sequence is that of MAP7 domain-containing protein 1 (MAP7D1) from Homo sapiens (Human).